Consider the following 107-residue polypeptide: UPF0145 protein ECA2666 (107 aa).

The protein belongs to the UPF0145 family.

This chain is UPF0145 protein ECA2666, found in Pectobacterium atrosepticum (strain SCRI 1043 / ATCC BAA-672) (Erwinia carotovora subsp. atroseptica).